Reading from the N-terminus, the 113-residue chain is Large ribosomal subunit protein uL22 (113 aa).

The protein belongs to the universal ribosomal protein uL22 family. Part of the 50S ribosomal subunit.

In terms of biological role, this protein binds specifically to 23S rRNA; its binding is stimulated by other ribosomal proteins, e.g. L4, L17, and L20. It is important during the early stages of 50S assembly. It makes multiple contacts with different domains of the 23S rRNA in the assembled 50S subunit and ribosome. Functionally, the globular domain of the protein is located near the polypeptide exit tunnel on the outside of the subunit, while an extended beta-hairpin is found that lines the wall of the exit tunnel in the center of the 70S ribosome. This is Large ribosomal subunit protein uL22 from Bacillus subtilis (strain 168).